Reading from the N-terminus, the 119-residue chain is Ribonuclease P protein component (119 aa).

This sequence belongs to the RnpA family. Consists of a catalytic RNA component (M1 or rnpB) and a protein subunit.

It catalyses the reaction Endonucleolytic cleavage of RNA, removing 5'-extranucleotides from tRNA precursor.. In terms of biological role, RNaseP catalyzes the removal of the 5'-leader sequence from pre-tRNA to produce the mature 5'-terminus. It can also cleave other RNA substrates such as 4.5S RNA. The protein component plays an auxiliary but essential role in vivo by binding to the 5'-leader sequence and broadening the substrate specificity of the ribozyme. The polypeptide is Ribonuclease P protein component (Serratia proteamaculans (strain 568)).